We begin with the raw amino-acid sequence, 1234 residues long: DNA-directed RNA polymerase subunit beta (1234 aa).

Positions 1169–1234 (ESVDEDADEL…LDLDDFGDEH (66 aa)) are disordered. 2 stretches are compositionally biased toward acidic residues: residues 1171 to 1180 (VDEDADELEV) and 1191 to 1234 (EKEE…GDEH).

The protein belongs to the RNA polymerase beta chain family. The RNAP catalytic core consists of 2 alpha, 1 beta, 1 beta' and 1 omega subunit. When a sigma factor is associated with the core the holoenzyme is formed, which can initiate transcription.

It catalyses the reaction RNA(n) + a ribonucleoside 5'-triphosphate = RNA(n+1) + diphosphate. Its function is as follows. DNA-dependent RNA polymerase catalyzes the transcription of DNA into RNA using the four ribonucleoside triphosphates as substrates. The protein is DNA-directed RNA polymerase subunit beta of Clostridium botulinum (strain Langeland / NCTC 10281 / Type F).